Consider the following 468-residue polypeptide: Cysteine--tRNA ligase (468 aa).

Residue Cys33 coordinates Zn(2+). The 'HIGH' region motif lies at 35 to 45 (ATVQGLPHIGH). The Zn(2+) site is built by Cys211, His236, and Glu240. Residues 267–271 (KMSKS) carry the 'KMSKS' region motif. Lys270 serves as a coordination point for ATP.

The protein belongs to the class-I aminoacyl-tRNA synthetase family. As to quaternary structure, monomer. Zn(2+) is required as a cofactor.

Its subcellular location is the cytoplasm. It carries out the reaction tRNA(Cys) + L-cysteine + ATP = L-cysteinyl-tRNA(Cys) + AMP + diphosphate. The sequence is that of Cysteine--tRNA ligase from Mycobacterium ulcerans (strain Agy99).